Consider the following 394-residue polypeptide: NAD(P)H-quinone oxidoreductase subunit H (394 aa).

This sequence belongs to the complex I 49 kDa subunit family. As to quaternary structure, NDH-1 can be composed of about 15 different subunits; different subcomplexes with different compositions have been identified which probably have different functions. In terms of processing, the initiator methionine has been seen to be kept and removed.

It localises to the cellular thylakoid membrane. The enzyme catalyses a plastoquinone + NADH + (n+1) H(+)(in) = a plastoquinol + NAD(+) + n H(+)(out). It catalyses the reaction a plastoquinone + NADPH + (n+1) H(+)(in) = a plastoquinol + NADP(+) + n H(+)(out). NDH-1 shuttles electrons from an unknown electron donor, via FMN and iron-sulfur (Fe-S) centers, to quinones in the respiratory and/or the photosynthetic chain. The immediate electron acceptor for the enzyme in this species is believed to be plastoquinone. Couples the redox reaction to proton translocation, and thus conserves the redox energy in a proton gradient. Cyanobacterial NDH-1 also plays a role in inorganic carbon-concentration. In Synechocystis sp. (strain ATCC 27184 / PCC 6803 / Kazusa), this protein is NAD(P)H-quinone oxidoreductase subunit H (ndhH).